The primary structure comprises 301 residues: Glutamyl-Q tRNA(Asp) synthetase (301 aa).

L-glutamate contacts are provided by residues 9–13 and E45; that span reads RFAPS. The short motif at 12-22 is the 'HIGH' region element; it reads PSPTGPLHLGS. 4 residues coordinate Zn(2+): C101, C103, Y121, and C125. Residues Y179 and R197 each coordinate L-glutamate. A 'KMSKS' region motif is present at residues 235-239; sequence KLSKQ. Residue K238 participates in ATP binding.

This sequence belongs to the class-I aminoacyl-tRNA synthetase family. GluQ subfamily. Requires Zn(2+) as cofactor.

Functionally, catalyzes the tRNA-independent activation of glutamate in presence of ATP and the subsequent transfer of glutamate onto a tRNA(Asp). Glutamate is transferred on the 2-amino-5-(4,5-dihydroxy-2-cyclopenten-1-yl) moiety of the queuosine in the wobble position of the QUC anticodon. The sequence is that of Glutamyl-Q tRNA(Asp) synthetase from Thiobacillus denitrificans (strain ATCC 25259 / T1).